Here is a 648-residue protein sequence, read N- to C-terminus: DNA mismatch repair protein MutL (648 aa).

The interval E336–R443 is disordered. Over residues S370 to E381 the composition is skewed to polar residues. Basic and acidic residues predominate over residues S383–A410.

This sequence belongs to the DNA mismatch repair MutL/HexB family.

Functionally, this protein is involved in the repair of mismatches in DNA. It is required for dam-dependent methyl-directed DNA mismatch repair. May act as a 'molecular matchmaker', a protein that promotes the formation of a stable complex between two or more DNA-binding proteins in an ATP-dependent manner without itself being part of a final effector complex. This chain is DNA mismatch repair protein MutL, found in Shewanella sp. (strain ANA-3).